Consider the following 219-residue polypeptide: Ribose-5-phosphate isomerase A (219 aa).

Residues 28–31 (SGST), 81–84 (DGAD), and 94–97 (KGGG) each bind substrate. Residue Glu103 is the Proton acceptor of the active site. Lys121 provides a ligand contact to substrate.

Belongs to the ribose 5-phosphate isomerase family. In terms of assembly, homodimer.

The enzyme catalyses aldehydo-D-ribose 5-phosphate = D-ribulose 5-phosphate. The protein operates within carbohydrate degradation; pentose phosphate pathway; D-ribose 5-phosphate from D-ribulose 5-phosphate (non-oxidative stage): step 1/1. Its function is as follows. Catalyzes the reversible conversion of ribose-5-phosphate to ribulose 5-phosphate. This Haemophilus influenzae (strain 86-028NP) protein is Ribose-5-phosphate isomerase A.